Here is a 501-residue protein sequence, read N- to C-terminus: Glycine betaine/proline/ectoine/pipecolic acid transporter OusA (501 aa).

Over 1–38 (MKLKRKRVKPIALDDVTIIDDGRLRKAITAAALGNAME) the chain is Cytoplasmic. A helical transmembrane segment spans residues 39-59 (WFDFGVYGFVAYALGQVFFPG). At 60 to 66 (ADPGVQM) the chain is on the periplasmic side. A helical membrane pass occupies residues 67-87 (IAALATFSVPFLIRPLGGVFF). Residues 88-98 (GALGDKYGRQK) lie on the Cytoplasmic side of the membrane. The chain crosses the membrane as a helical span at residues 99–119 (ILAITIIIMSISTFCIGLIPS). Topologically, residues 120–122 (YER) are periplasmic. The helical transmembrane segment at 123–143 (IGIWAPILLLLAKMAQGFSVG) threads the bilayer. Topologically, residues 144 to 170 (GEYTGASIFVAEYSPDRKRGFMGSWLD) are cytoplasmic. The chain crosses the membrane as a helical span at residues 171–191 (FGSIAGFVLGAGVVVLISTLI). Over 192-195 (GEQA) the chain is Periplasmic. Residues 196-216 (FLAWGWRLPFFLALPLGLIGL) traverse the membrane as a helical segment. Residues 217–261 (YLRHALEETPAFRQHVEKLEQNDRDGLKAGPGVSFREIATHHWKS) lie on the Cytoplasmic side of the membrane. A helical transmembrane segment spans residues 262–282 (LLVCIGLVIATNVTYYMLLTY). Over 283-298 (MPSYLSHSLHYSENHG) the chain is Periplasmic. Residues 299–319 (VLIIIAIMIGMLFVQPVMGLL) traverse the membrane as a helical segment. The Cytoplasmic segment spans residues 320–326 (SDRFGRK). A helical transmembrane segment spans residues 327 to 347 (PFVVIGSVAMFFLAVPSFMLI). The Periplasmic portion of the chain corresponds to 348–350 (NSD). The chain crosses the membrane as a helical span at residues 351–371 (IIGLIFLGLLMLAVILNAFTG). Over 372–391 (VMASTLPALFPTHIRYSALA) the chain is Cytoplasmic. Residues 392-412 (SAFNISVLIAGLTPTVAAWLV) traverse the membrane as a helical segment. At 413–417 (ESSQN) the chain is on the periplasmic side. The helical transmembrane segment at 418-438 (LYMPAYYLMVIAVIGLLTGLF) threads the bilayer. The Cytoplasmic segment spans residues 439–501 (MKETANKPLK…LVAQHPRIND (63 aa)). Positions 461-495 (KEILQEHHDNIEHKIEDITQQIAELEAKRQLLVAQ) form a coiled coil.

Belongs to the major facilitator superfamily. Sugar transporter (TC 2.A.1.1) family.

It localises to the cell inner membrane. Functionally, involved in uptake and accumulation of various osmoprotectants. Allows the uptake of glycine betaine, proline, ectoine, and pipecolic acid. May be a contributory factor in the infection progression within the host. The polypeptide is Glycine betaine/proline/ectoine/pipecolic acid transporter OusA (Dickeya dadantii (strain 3937) (Erwinia chrysanthemi (strain 3937))).